The primary structure comprises 146 residues: Acetyl-CoA decarbonylase/synthase complex subunit epsilon (146 aa).

The protein belongs to the CdhB family. In terms of assembly, heterotetramer of two alpha and two epsilon subunits. The ACDS complex is made up of alpha, epsilon, beta, gamma and delta subunits with a probable stoichiometry of (alpha(2)epsilon(2))(4)-beta(8)-(gamma(1)delta(1))(8).

Its function is as follows. Part of a complex that catalyzes the reversible cleavage of acetyl-CoA, allowing autotrophic growth from CO(2). The alpha-epsilon subcomponent functions as a carbon monoxide dehydrogenase. The precise role of the epsilon subunit is unclear; it may have a stabilizing role within the alpha(2)epsilon(2) component and/or be involved in electron transfer to FAD during a potential FAD-mediated CO oxidation. The sequence is that of Acetyl-CoA decarbonylase/synthase complex subunit epsilon from Methanocaldococcus jannaschii (strain ATCC 43067 / DSM 2661 / JAL-1 / JCM 10045 / NBRC 100440) (Methanococcus jannaschii).